The chain runs to 525 residues: Ent-kaurene oxidase (525 aa).

Residues 31 to 51 traverse the membrane as a helical segment; it reads VHWLIYVAFGAWLCSYVIHVL. Residue C466 coordinates heme.

This sequence belongs to the cytochrome P450 family. The cofactor is heme.

Its subcellular location is the membrane. It catalyses the reaction ent-kaur-16-ene + 3 reduced [NADPH--hemoprotein reductase] + 3 O2 = ent-kaur-16-en-19-oate + 3 oxidized [NADPH--hemoprotein reductase] + 4 H2O + 4 H(+). It functions in the pathway plant hormone biosynthesis; gibberellin biosynthesis. Its function is as follows. Catalyzes three successive oxidations of the 4-methyl group of ent-kaurene giving kaurenoic acid, a key step in gibberellin (GA) biosynthesis. The chain is Ent-kaurene oxidase (CYP503A1) from Fusarium fujikuroi (Bakanae and foot rot disease fungus).